The chain runs to 392 residues: Probable inactive serine/threonine-protein kinase DDB_G0280855 (392 aa).

Positions 46–349 (ITKKTIYACD…IERIIQHPYF (304 aa)) constitute a Protein kinase domain. ATP is bound by residues 52-60 (YACDINGTM) and Lys-75.

Belongs to the protein kinase superfamily. CMGC Ser/Thr protein kinase family. MAP kinase subfamily.

In Dictyostelium discoideum (Social amoeba), this protein is Probable inactive serine/threonine-protein kinase DDB_G0280855.